A 296-amino-acid chain; its full sequence is Glycine and tyrosine-rich protein (296 aa).

The N-terminal stretch at 1–18 (MKVLVTALIISFSTAVLT) is a signal peptide. The disordered stretch occupies residues 157-280 (MESRLRPQAT…NQPEETPAPN (124 aa)). Over residues 172–264 (TGGQPSTGGK…STGGQPSTGG (93 aa)) the composition is skewed to low complexity.

In terms of tissue distribution, component of the acid-insoluble and acid-soluble organic matrix of calcified layers of the shell (at protein level).

It localises to the secreted. This Lottia gigantea (Giant owl limpet) protein is Glycine and tyrosine-rich protein.